A 311-amino-acid polypeptide reads, in one-letter code: 4-diphosphocytidyl-2-C-methyl-D-erythritol kinase (311 aa).

Lys16 is an active-site residue. 101 to 111 (PVAGGMAGGSA) provides a ligand contact to ATP. Residue Asp143 is part of the active site.

The protein belongs to the GHMP kinase family. IspE subfamily.

It catalyses the reaction 4-CDP-2-C-methyl-D-erythritol + ATP = 4-CDP-2-C-methyl-D-erythritol 2-phosphate + ADP + H(+). Its pathway is isoprenoid biosynthesis; isopentenyl diphosphate biosynthesis via DXP pathway; isopentenyl diphosphate from 1-deoxy-D-xylulose 5-phosphate: step 3/6. Catalyzes the phosphorylation of the position 2 hydroxy group of 4-diphosphocytidyl-2C-methyl-D-erythritol. This Rhodococcus jostii (strain RHA1) protein is 4-diphosphocytidyl-2-C-methyl-D-erythritol kinase.